Reading from the N-terminus, the 380-residue chain is MGTLHLKQNPLLKITNKSLINLPSPSNISAWWNFGSLLGMCLILQITTGIFLAMHYTPNITTAFSSVAHITRDVQYGWLLRGLHANGASIFFICLYFHIGRGIYYGSFLNKKTWYTGIMLLFLTMATAFMGYILPWGQMSFWGATVITNLLSAIPYMGTNLVQWIWGGFSVDNATLTRFFTLHFLTPFIISSLTTIHLLLLHEKGSNNPTGLNSNPDKIPFHPYFSYKDLLGVNLLMIGLLTLTLFLPNLLTDPENFTPANPLSTPKHIKPEWYFLFAYAILRSIPNKLGGVLALLSSVTILFIMPTLHTSKQRSATFRPFTQILFWSPTADLVILTWIGAQPVEDPFIMIGQTASVFYFTLILLLIPLAAILENKLLDY.

The next 4 membrane-spanning stretches (helical) occupy residues 34–54 (FGSL…FLAM), 78–99 (WLLR…YFHI), 114–134 (WYTG…GYIL), and 179–199 (FFTL…IHLL). Histidine 84 and histidine 98 together coordinate heme b. Histidine 183 and histidine 197 together coordinate heme b. Residue histidine 202 coordinates a ubiquinone. Helical transmembrane passes span 227–247 (YKDL…TLFL), 289–309 (LGGV…PTLH), 321–341 (FTQI…WIGA), and 348–368 (FIMI…LLIP).

Belongs to the cytochrome b family. The cytochrome bc1 complex contains 3 respiratory subunits (MT-CYB, CYC1 and UQCRFS1), 2 core proteins (UQCRC1 and UQCRC2) and probably 6 low-molecular weight proteins. The cofactor is heme b.

The protein localises to the mitochondrion inner membrane. Its function is as follows. Component of the ubiquinol-cytochrome c reductase complex (complex III or cytochrome b-c1 complex) that is part of the mitochondrial respiratory chain. The b-c1 complex mediates electron transfer from ubiquinol to cytochrome c. Contributes to the generation of a proton gradient across the mitochondrial membrane that is then used for ATP synthesis. The chain is Cytochrome b (MT-CYB) from Pelomedusa subrufa (African side-necked turtle).